A 96-amino-acid polypeptide reads, in one-letter code: uncharacterized protein (96 aa).

A compositionally biased stretch (basic and acidic residues) spans 1 to 18 (MSNVDRYDVHRDGIEKDR). Positions 1–96 (MSNVDRYDVH…REQHHQPQKQ (96 aa)) are disordered. A compositionally biased stretch (polar residues) spans 28 to 46 (QNGQSQSTMDNRPPWNNDT). Over residues 70-96 (TIDRQQEELTKNWTESLREQHHQPQKQ) the composition is skewed to basic and acidic residues.

This is an uncharacterized protein from Caenorhabditis elegans.